Here is a 67-residue protein sequence, read N- to C-terminus: Conotoxin Cal12.1p2 (67 aa).

The propeptide occupies 1 to 21 (DLITNSYTRGKPRHVTSWRNL).

Post-translationally, contains 4 disulfide bonds. As to expression, expressed by the venom duct.

It is found in the secreted. This Californiconus californicus (California cone) protein is Conotoxin Cal12.1p2.